Consider the following 213-residue polypeptide: Large ribosomal subunit protein uL18c (213 aa).

Belongs to the universal ribosomal protein uL18 family.

Its subcellular location is the plastid. The protein localises to the apicoplast. In Plasmodium falciparum (isolate 3D7), this protein is Large ribosomal subunit protein uL18c (RPL18).